The primary structure comprises 333 residues: Ribosome biogenesis regulatory protein homolog (333 aa).

Disordered stretches follow at residues 227 to 248 (KANV…VSGE) and 271 to 333 (AAAV…ARKG). The segment covering 278–295 (LREKKEKSERKGAKDQTR) has biased composition (basic and acidic residues). A compositionally biased stretch (basic residues) spans 324-333 (GANKAKARKG).

This sequence belongs to the RRS1 family.

It is found in the nucleus. Its subcellular location is the nucleolus. Functionally, involved in ribosomal large subunit assembly. The sequence is that of Ribosome biogenesis regulatory protein homolog from Caenorhabditis elegans.